The chain runs to 233 residues: Preflagellin peptidase (233 aa).

Residue Met-1 is a topological domain, cytoplasmic. A helical transmembrane segment spans residues 2–18 (IAYAIGLLGLLIASIQD). Over 19 to 23 (IKSRE) the chain is Extracellular. The helical transmembrane segment at 24 to 46 (IENYIWIGMAVIGLLLSTYLSFT) threads the bilayer. Residues 47–49 (TGN) are Cytoplasmic-facing. The helical transmembrane segment at 50–72 (FMPIISSISGFIICFIIGYLMFV) threads the bilayer. The Extracellular segment spans residues 73-78 (LGIGGA). The helical transmembrane segment at 79–89 (DGKILMGMGAL) threads the bilayer. At 90–110 (IPSYAFPVYSSLQPLYTMEYI) the chain is on the cytoplasmic side. Residues 111–139 (PWFPLLVFFNGVILMIVLPIYLFFKNLSN) traverse the membrane as a helical segment. The Extracellular segment spans residues 140 to 207 (GVKPKKLKEY…QYVWATPELP (68 aa)). A helical transmembrane segment spans residues 208-219 (LLVPIALSYIIT). At 220–233 (PFLGDKILSIILPM) the chain is on the cytoplasmic side.

The protein belongs to the peptidase A24 family. Archaeal preflagellin peptidase subfamily.

Its subcellular location is the cell membrane. It catalyses the reaction Cleaves the signal peptide of 3 to 12 amino acids from the N-terminal of preflagellin, usually at Arg-Gly-|- or Lys-Gly-|-, to release flagellin.. Cleaves the N-terminal leader peptide from preflagellins. The processing of preflagellins is necessary for assembly of flagellins into a flagellum structure. This is Preflagellin peptidase (flaK) from Methanococcus voltae.